The sequence spans 395 residues: Ribosomal RNA large subunit methyltransferase G (395 aa).

The protein belongs to the methyltransferase superfamily. RlmG family.

The protein resides in the cytoplasm. The catalysed reaction is guanosine(1835) in 23S rRNA + S-adenosyl-L-methionine = N(2)-methylguanosine(1835) in 23S rRNA + S-adenosyl-L-homocysteine + H(+). Its function is as follows. Specifically methylates the guanine in position 1835 (m2G1835) of 23S rRNA. This chain is Ribosomal RNA large subunit methyltransferase G, found in Yersinia pestis (strain Pestoides F).